Reading from the N-terminus, the 562-residue chain is Arginine--tRNA ligase (562 aa).

The short motif at 121–131 is the 'HIGH' region element; that stretch reads PNIAKPFSVGH.

It belongs to the class-I aminoacyl-tRNA synthetase family. As to quaternary structure, monomer.

The protein resides in the cytoplasm. The enzyme catalyses tRNA(Arg) + L-arginine + ATP = L-arginyl-tRNA(Arg) + AMP + diphosphate. The sequence is that of Arginine--tRNA ligase from Streptococcus uberis (strain ATCC BAA-854 / 0140J).